Here is a 696-residue protein sequence, read N- to C-terminus: Translation factor waclaw, mitochondrial (696 aa).

The transit peptide at 1-76 (MIVGYSVFFH…RNLSTTNQVK (76 aa)) directs the protein to the mitochondrion. In terms of domain architecture, tr-type G spans 97–278 (ERIRNFSIIA…RVIETVPPPQ (182 aa)). GTP is bound by residues 106–113 (AHVDHGKS), 171–175 (DTPGH), and 225–228 (NKID).

Belongs to the TRAFAC class translation factor GTPase superfamily. Classic translation factor GTPase family. LepA subfamily.

The protein localises to the mitochondrion inner membrane. The catalysed reaction is GTP + H2O = GDP + phosphate + H(+). Its function is as follows. Promotes mitochondrial protein synthesis. May act as a fidelity factor of the translation reaction, by catalyzing a one-codon backward translocation of tRNAs on improperly translocated ribosomes. Binds to mitochondrial ribosomes in a GTP-dependent manner. The polypeptide is Translation factor waclaw, mitochondrial (Drosophila melanogaster (Fruit fly)).